Here is a 338-residue protein sequence, read N- to C-terminus: GTPase Obg (338 aa).

The Obg domain maps to 1–159; sequence MQFIDQAEIE…RRIRLELKLL (159 aa). An OBG-type G domain is found at 160–328; sequence AEVGIIGLPN…MLQATWEQLD (169 aa). GTP is bound by residues 166–173, 191–195, 213–216, 280–283, and 309–311; these read GLPNAGKS, FTTLI, DIPG, NKLD, and SAV. Mg(2+) is bound by residues Ser-173 and Thr-193.

Belongs to the TRAFAC class OBG-HflX-like GTPase superfamily. OBG GTPase family. In terms of assembly, monomer. Mg(2+) is required as a cofactor.

It localises to the cytoplasm. In terms of biological role, an essential GTPase which binds GTP, GDP and possibly (p)ppGpp with moderate affinity, with high nucleotide exchange rates and a fairly low GTP hydrolysis rate. Plays a role in control of the cell cycle, stress response, ribosome biogenesis and in those bacteria that undergo differentiation, in morphogenesis control. The chain is GTPase Obg from Gloeothece citriformis (strain PCC 7424) (Cyanothece sp. (strain PCC 7424)).